Reading from the N-terminus, the 359-residue chain is Histidinol-phosphate aminotransferase (359 aa).

Lysine 217 is modified (N6-(pyridoxal phosphate)lysine).

This sequence belongs to the class-II pyridoxal-phosphate-dependent aminotransferase family. Histidinol-phosphate aminotransferase subfamily. In terms of assembly, homodimer. It depends on pyridoxal 5'-phosphate as a cofactor.

It catalyses the reaction L-histidinol phosphate + 2-oxoglutarate = 3-(imidazol-4-yl)-2-oxopropyl phosphate + L-glutamate. The protein operates within amino-acid biosynthesis; L-histidine biosynthesis; L-histidine from 5-phospho-alpha-D-ribose 1-diphosphate: step 7/9. The chain is Histidinol-phosphate aminotransferase from Roseobacter denitrificans (strain ATCC 33942 / OCh 114) (Erythrobacter sp. (strain OCh 114)).